The following is a 141-amino-acid chain: Galactose-6-phosphate isomerase subunit LacA (141 aa).

Belongs to the LacAB/RpiB family. In terms of assembly, heteromultimeric protein consisting of LacA and LacB.

It carries out the reaction aldehydo-D-galactose 6-phosphate = keto-D-tagatose 6-phosphate. It functions in the pathway carbohydrate metabolism; D-galactose 6-phosphate degradation; D-tagatose 6-phosphate from D-galactose 6-phosphate: step 1/1. This chain is Galactose-6-phosphate isomerase subunit LacA, found in Streptococcus pneumoniae (strain ATCC 700669 / Spain 23F-1).